The sequence spans 364 residues: MSGNSIGQNFVVTTFGESHGKALGCIIDGCPPGLAIDEADMQHDLDRRRPGTSRYTTARREPDQVKILSGVFEGQTTGTSIGLVIENTDQRSQDYSNIKDQFRPGHADYTYQQKYGLRDYRGGGRSSARETAMRVAAGAVAKKYLKQVHGIEIKGYLSQLGPICAEILDFDQVEHNAFFFPDAAKLEQLDEYMRELKKSGDSIGAKVSVVATNVPVGLGEPVFDRLDADIAHALMGINAVKGVEIGDGFAVVNQKGSEHRDLMSPEGFASNHAGGILGGISSGQPIVAHIAMKPTSSISVPGESMTVQGERAEVVTKGRHDPCVGIRAVPIAEAMLAIVLMDHLLRHRAQNMNVESITPVIGMK.

NADP(+) is bound by residues arginine 48 and arginine 54. Residues arginine 125–serine 127, asparagine 238–alanine 239, glycine 278, lysine 293–serine 297, and arginine 319 each bind FMN.

The protein belongs to the chorismate synthase family. As to quaternary structure, homotetramer. FMNH2 serves as cofactor.

The enzyme catalyses 5-O-(1-carboxyvinyl)-3-phosphoshikimate = chorismate + phosphate. Its pathway is metabolic intermediate biosynthesis; chorismate biosynthesis; chorismate from D-erythrose 4-phosphate and phosphoenolpyruvate: step 7/7. Functionally, catalyzes the anti-1,4-elimination of the C-3 phosphate and the C-6 proR hydrogen from 5-enolpyruvylshikimate-3-phosphate (EPSP) to yield chorismate, which is the branch point compound that serves as the starting substrate for the three terminal pathways of aromatic amino acid biosynthesis. This reaction introduces a second double bond into the aromatic ring system. This chain is Chorismate synthase, found in Shewanella loihica (strain ATCC BAA-1088 / PV-4).